Reading from the N-terminus, the 153-residue chain is Endoribonuclease RegB (153 aa).

Its activity is regulated as follows. Activity is stimulated 10- to 100-fold by host ribosomal protein S1, which also helps confer substrate choice. Functionally, essential to the early nucleolytic processing of a number of T4 messenger RNAs. Specifically cleaves after the GG dinucleotide GGAG within consensus 5'-GGAGRAYARAA-3' (R is a purine and Y is a pyrimidine) sequences found mainly in translation initiation sites. This Enterobacteria phage T4 (Bacteriophage T4) protein is Endoribonuclease RegB (regB).